The chain runs to 952 residues: Ubiquitin carboxyl-terminal hydrolase 15 (952 aa).

Ala-2 carries the N-acetylalanine modification. Residues 2 to 223 (AEGGAADLDI…KNEDGTWPRG (222 aa)) form a mediates interaction with SART3 region. Positions 7–118 (ADLDIQRSDI…GQEPIARKVV (112 aa)) constitute a DUSP domain. Thr-226 is subject to Phosphothreonine. In terms of domain architecture, USP spans 260-904 (CGLSNLGNTC…AAYVLFYQRQ (645 aa)). The active-site Nucleophile is the Cys-269. Thr-573 is subject to Phosphothreonine. Positions 598–666 (TEGSLHCCKD…GDNDSENGLC (69 aa)) are disordered. The span at 627–644 (METDEPDDESSQDQELPS) shows a compositional bias: acidic residues. Residue His-862 is the Proton acceptor of the active site. The tract at residues 923–952 (SAATGIPLESDEDSNDNDNDIENENCMHTN) is disordered. A compositionally biased stretch (acidic residues) spans 931–945 (ESDEDSNDNDNDIEN). Ser-932 and Ser-936 each carry phosphoserine.

The protein belongs to the peptidase C19 family. As to quaternary structure, a homodimer structure has been reported; however it is unclear whether the protein form a homodimer in vivo. Identified in a complex with the COP9 signalosome complex (CSN). Interacts with SMAD1, SMAD2 and SMAD3; the interaction is direct. Forms a complex with SMURF2 and SMAD7. Interacts with TGFBR1. Interacts with SART3; the interaction is direct. May interact with RNF20 and RNF40. May interact with PRKN. Interacts with INCA1. Post-translationally, phosphorylated. Phosphorylation protects against ubiquitination and subsequent degradation by the proteasome. Ubiquitinated, leading to degradation by the proteasome.

The protein resides in the cytoplasm. Its subcellular location is the nucleus. The protein localises to the mitochondrion. The catalysed reaction is Thiol-dependent hydrolysis of ester, thioester, amide, peptide and isopeptide bonds formed by the C-terminal Gly of ubiquitin (a 76-residue protein attached to proteins as an intracellular targeting signal).. Hydrolase that removes conjugated ubiquitin from target proteins and regulates various pathways such as the TGF-beta receptor signaling, NF-kappa-B and RNF41/NRDP1-PRKN pathways. Acts as a key regulator of TGF-beta receptor signaling pathway, but the precise mechanism is still unclear: according to a report, acts by promoting deubiquitination of monoubiquitinated R-SMADs (SMAD1, SMAD2 and/or SMAD3), thereby alleviating inhibition of R-SMADs and promoting activation of TGF-beta target genes. According to another reports, regulates the TGF-beta receptor signaling pathway by mediating deubiquitination and stabilization of TGFBR1, leading to an enhanced TGF-beta signal. Able to mediate deubiquitination of monoubiquitinated substrates, 'Lys-27'-, 'Lys-48'- and 'Lys-63'-linked polyubiquitin chains. May also regulate gene expression and/or DNA repair through the deubiquitination of histone H2B. Acts as an inhibitor of mitophagy by counteracting the action of parkin (PRKN): hydrolyzes cleavage of 'Lys-48'- and 'Lys-63'-linked polyubiquitin chains attached by parkin on target proteins such as MFN2, thereby reducing parkin's ability to drive mitophagy. Acts as an associated component of COP9 signalosome complex (CSN) and regulates different pathways via this association: regulates NF-kappa-B by mediating deubiquitination of NFKBIA and deubiquitinates substrates bound to VCP. Involved in endosome organization by mediating deubiquitination of SQSTM1: ubiquitinated SQSTM1 forms a molecular bridge that restrains cognate vesicles in the perinuclear region and its deubiquitination releases target vesicles for fast transport into the cell periphery. Acts as a negative regulator of antifungal immunity by mediating 'Lys-27'-linked deubiquitination of CARD9, thereby inactivating CARD9. The sequence is that of Ubiquitin carboxyl-terminal hydrolase 15 (USP15) from Bos taurus (Bovine).